Reading from the N-terminus, the 1223-residue chain is Glycerophosphocholine phosphodiesterase GDE1 (1223 aa).

One can recognise an SPX domain in the interval 1-213; sequence MKFGKTFANH…GTNQQMSTMK (213 aa). A compositionally biased stretch (basic and acidic residues) spans 43–59; sequence HNKNSYDEGRPPTKMRD. Residues 43–64 are disordered; sequence HNKNSYDEGRPPTKMRDSSNSA. ANK repeat units lie at residues 427–456, 472–502, 504–533, 538–567, 572–601, and 605–634; these read YKRT…EWNI, ESLT…NVKL, SSSL…DINY, LHET…DLEI, FGWT…NFDI, and GGWT…LVTH. S653 carries the phosphoserine modification. One can recognise a GP-PDE domain in the interval 872–1217; that stretch reads TRVIGHRGLG…DSVLAIRRGL (346 aa). 3 residues coordinate a divalent metal cation: E911, D913, and H926. At S983 the chain carries Phosphoserine.

The protein belongs to the GDE1 family. It depends on a divalent metal cation as a cofactor.

The protein localises to the cytoplasm. The enzyme catalyses sn-glycerol 3-phosphocholine + H2O = sn-glycerol 3-phosphate + choline + H(+). It catalyses the reaction sn-glycero-3-phospho-1D-myo-inositol + H2O = myo-inositol + sn-glycerol 3-phosphate + H(+). In terms of biological role, glycerophosphocholine glycerophosphodiesterase responsible for the hydrolysis of intracellular glycerophosphocholine into glycerol-phosphate and choline. The choline is used for phosphatidyl-choline synthesis. Required for utilization of glycerophosphocholine as phosphate source. May also use glycerophosphoinositol as substrate in vivo. The sequence is that of Glycerophosphocholine phosphodiesterase GDE1 from Saccharomyces cerevisiae (strain ATCC 204508 / S288c) (Baker's yeast).